Reading from the N-terminus, the 357-residue chain is Golgi to ER traffic protein 2 (357 aa).

Residues 1 to 224 lie on the Cytoplasmic side of the membrane; sequence MSETTDKQLT…AKYHTYQEQL (224 aa). Residues 65 to 81 show a composition bias toward low complexity; it reads TDTATVTDSSTNATSVS. Positions 65-99 are disordered; it reads TDTATVTDSSTNATSVSPSAAKATPTSTGVSSAIS. The segment covering 88 to 98 has biased composition (polar residues); that stretch reads TPTSTGVSSAI. A helical transmembrane segment spans residues 225 to 245; sequence WQFRFLVVRILATIFNFAYHF. Over 246 to 270 the chain is Lumenal; it reads ITIPSFTASNHAYVRDLSEVYPLLG. A helical transmembrane segment spans residues 271-290; the sequence is FMTIFTSIEVVIIATYYLLF. Topologically, residues 291 to 334 are cytoplasmic; it reads TKLGLFHASNQKSFILKGISTLSMFVPQLLRYEPLVATFLGYKE. Residues 335-355 traverse the membrane as a helical segment; sequence LLGIFVGDLSLVVVMFGLLSF. At 356-357 the chain is on the lumenal side; the sequence is SN.

It belongs to the GET2 family. Component of the Golgi to ER traffic (GET) complex, which is composed of GET1, GET2 and GET3. Within the complex, GET1 and GET2 form a heterotetramer which is stabilized by phosphatidylinositol binding and which binds to the GET3 homodimer.

The protein localises to the endoplasmic reticulum membrane. The protein resides in the golgi apparatus membrane. Functionally, required for the post-translational delivery of tail-anchored (TA) proteins to the endoplasmic reticulum. Together with GET1, acts as a membrane receptor for soluble GET3, which recognizes and selectively binds the transmembrane domain of TA proteins in the cytosol. The GET complex cooperates with the HDEL receptor ERD2 to mediate the ATP-dependent retrieval of resident ER proteins that contain a C-terminal H-D-E-L retention signal from the Golgi to the ER. The polypeptide is Golgi to ER traffic protein 2 (Lodderomyces elongisporus (strain ATCC 11503 / CBS 2605 / JCM 1781 / NBRC 1676 / NRRL YB-4239) (Yeast)).